A 520-amino-acid chain; its full sequence is Eukaryotic translation initiation factor 3 subunit L (520 aa).

In terms of domain architecture, PCI spans 278–478 (FATYYYVGIC…ELDIALENDL (201 aa)).

This sequence belongs to the eIF-3 subunit L family. As to quaternary structure, component of the eukaryotic translation initiation factor 3 (eIF-3) complex.

The protein localises to the cytoplasm. Component of the eukaryotic translation initiation factor 3 (eIF-3) complex, which is involved in protein synthesis of a specialized repertoire of mRNAs and, together with other initiation factors, stimulates binding of mRNA and methionyl-tRNAi to the 40S ribosome. The eIF-3 complex specifically targets and initiates translation of a subset of mRNAs involved in cell proliferation. The protein is Eukaryotic translation initiation factor 3 subunit L of Yarrowia lipolytica (strain CLIB 122 / E 150) (Yeast).